The primary structure comprises 449 residues: Probable phosphoglucosamine mutase (449 aa).

Catalysis depends on Ser96, which acts as the Phosphoserine intermediate. Residues Ser96, Asp233, Asp235, and Asp237 each coordinate Mg(2+). Position 96 is a phosphoserine (Ser96).

It belongs to the phosphohexose mutase family. Mg(2+) serves as cofactor. In terms of processing, activated by phosphorylation.

It catalyses the reaction alpha-D-glucosamine 1-phosphate = D-glucosamine 6-phosphate. Catalyzes the conversion of glucosamine-6-phosphate to glucosamine-1-phosphate. The polypeptide is Probable phosphoglucosamine mutase (Thermococcus gammatolerans (strain DSM 15229 / JCM 11827 / EJ3)).